The following is a 354-amino-acid chain: Virulence plasmid protein pGP2-D (354 aa).

This Chlamydia trachomatis serovar L2 (strain ATCC VR-902B / DSM 19102 / 434/Bu) protein is Virulence plasmid protein pGP2-D.